Here is a 542-residue protein sequence, read N- to C-terminus: Phosphoacetylglucosamine mutase 2 (542 aa).

The Phosphoserine intermediate role is filled by serine 77. Serine 77 is a Mg(2+) binding site. Phosphoserine is present on residues serine 77 and serine 82. The Mg(2+) site is built by aspartate 292, aspartate 294, and aspartate 296. Substrate contacts are provided by residues 385–387, 510–514, and arginine 519; these read EAN and RSSGT.

It belongs to the phosphohexose mutase family. Mg(2+) serves as cofactor.

It localises to the cytoplasm. It is found in the nucleus. It carries out the reaction N-acetyl-alpha-D-glucosamine 1-phosphate = N-acetyl-D-glucosamine 6-phosphate. Its pathway is nucleotide-sugar biosynthesis; UDP-N-acetyl-alpha-D-glucosamine biosynthesis; N-acetyl-alpha-D-glucosamine 1-phosphate from alpha-D-glucosamine 6-phosphate (route I): step 2/2. In terms of biological role, catalyzes the conversion of GlcNAc-6-P into GlcNAc-1-P during the synthesis of uridine diphosphate/UDP-GlcNAc, which is a biosynthetic precursor of chitin and also supplies the amino sugars for N-linked oligosaccharides of glycoproteins. The protein is Phosphoacetylglucosamine mutase 2 of Schizosaccharomyces pombe (strain 972 / ATCC 24843) (Fission yeast).